We begin with the raw amino-acid sequence, 425 residues long: UPF0597 protein Swoo_4889 (425 aa).

This sequence belongs to the UPF0597 family.

In Shewanella woodyi (strain ATCC 51908 / MS32), this protein is UPF0597 protein Swoo_4889.